Reading from the N-terminus, the 171-residue chain is Translationally-controlled tumor protein homolog (171 aa).

The TCTP domain maps to 1-171 (MIIYKDIITG…FKDGLEIEKC (171 aa)).

Belongs to the TCTP family.

The protein localises to the cytoplasm. Functionally, involved in calcium binding and microtubule stabilization. In Labeo rohita (Indian major carp), this protein is Translationally-controlled tumor protein homolog (tpt1).